The chain runs to 122 residues: Large ribosomal subunit protein uL14 (122 aa).

The protein belongs to the universal ribosomal protein uL14 family. As to quaternary structure, part of the 50S ribosomal subunit. Forms a cluster with proteins L3 and L19. In the 70S ribosome, L14 and L19 interact and together make contacts with the 16S rRNA in bridges B5 and B8.

Functionally, binds to 23S rRNA. Forms part of two intersubunit bridges in the 70S ribosome. This chain is Large ribosomal subunit protein uL14, found in Rhizobium etli (strain CIAT 652).